The following is a 1073-amino-acid chain: DNA-directed RNA polymerase subunit beta (1073 aa).

It belongs to the RNA polymerase beta chain family. As to quaternary structure, in plastids the minimal PEP RNA polymerase catalytic core is composed of four subunits: alpha, beta, beta', and beta''. When a (nuclear-encoded) sigma factor is associated with the core the holoenzyme is formed, which can initiate transcription.

It is found in the plastid. It localises to the chloroplast. The catalysed reaction is RNA(n) + a ribonucleoside 5'-triphosphate = RNA(n+1) + diphosphate. In terms of biological role, DNA-dependent RNA polymerase catalyzes the transcription of DNA into RNA using the four ribonucleoside triphosphates as substrates. The sequence is that of DNA-directed RNA polymerase subunit beta from Aethionema cordifolium (Lebanon stonecress).